The sequence spans 201 residues: Probable nicotinate-nucleotide adenylyltransferase (201 aa).

It belongs to the NadD family.

It catalyses the reaction nicotinate beta-D-ribonucleotide + ATP + H(+) = deamido-NAD(+) + diphosphate. It functions in the pathway cofactor biosynthesis; NAD(+) biosynthesis; deamido-NAD(+) from nicotinate D-ribonucleotide: step 1/1. Its function is as follows. Catalyzes the reversible adenylation of nicotinate mononucleotide (NaMN) to nicotinic acid adenine dinucleotide (NaAD). The polypeptide is Probable nicotinate-nucleotide adenylyltransferase (Bacteroides fragilis (strain YCH46)).